A 274-amino-acid chain; its full sequence is Transcriptional activator PerA (274 aa).

The HTH araC/xylS-type domain maps to 168 to 265 (DRVIKVIELD…NTTPKKYNGV (98 aa)). DNA-binding regions (H-T-H motif) lie at residues 185–206 (GDVSSSMFMSDSCLRKQLNKEN) and 232–255 (IDEISCLVGFNSTSYFIKVFKEYY).

Its function is as follows. Could help in the transcriptional activator of eaeA expression in enteropathogenic E.coli. However, it seems that it is PerC which acts as an activator. This is Transcriptional activator PerA (perA) from Escherichia coli O127:H6 (strain E2348/69 / EPEC).